Reading from the N-terminus, the 479-residue chain is Outer membrane protein OprJ (479 aa).

An N-terminal signal peptide occupies residues Met-1 to Ala-19. Residue Cys-20 is the site of N-palmitoyl cysteine attachment. Residue Cys-20 is the site of S-diacylglycerol cysteine attachment. The tract at residues Leu-102–Asn-121 is disordered.

Belongs to the outer membrane factor (OMF) (TC 1.B.17) family.

It is found in the cell outer membrane. In terms of biological role, channel-forming component of a multidrug resistance efflux pump. The chain is Outer membrane protein OprJ (oprJ) from Pseudomonas aeruginosa (strain ATCC 15692 / DSM 22644 / CIP 104116 / JCM 14847 / LMG 12228 / 1C / PRS 101 / PAO1).